Consider the following 1155-residue polypeptide: Probable translation initiation factor IF-2 (1155 aa).

In terms of domain architecture, DOD-type homing endonuclease spans 237-367 (FAGVMFGDGC…LSILLLRFEI (131 aa)). The region spanning 561-781 (TTETHNFIAN…VAGLAQKFLE (221 aa)) is the tr-type G domain. GTP contacts are provided by residues 634–638 (DTPGH) and 688–691 (NKID).

This sequence belongs to the TRAFAC class translation factor GTPase superfamily. Classic translation factor GTPase family. IF-2 subfamily. In terms of processing, this protein undergoes a protein self splicing that involves a post-translational excision of the intervening region (intein) followed by peptide ligation.

Its function is as follows. Function in general translation initiation by promoting the binding of the formylmethionine-tRNA to ribosomes. Seems to function along with eIF-2. The protein is Probable translation initiation factor IF-2 (infB) of Methanocaldococcus jannaschii (strain ATCC 43067 / DSM 2661 / JAL-1 / JCM 10045 / NBRC 100440) (Methanococcus jannaschii).